Here is a 103-residue protein sequence, read N- to C-terminus: Co-chaperonin GroES (103 aa).

This sequence belongs to the GroES chaperonin family. Heptamer of 7 subunits arranged in a ring. Interacts with the chaperonin GroEL.

It is found in the cytoplasm. Functionally, together with the chaperonin GroEL, plays an essential role in assisting protein folding. The GroEL-GroES system forms a nano-cage that allows encapsulation of the non-native substrate proteins and provides a physical environment optimized to promote and accelerate protein folding. GroES binds to the apical surface of the GroEL ring, thereby capping the opening of the GroEL channel. The protein is Co-chaperonin GroES of Prochlorococcus marinus (strain SARG / CCMP1375 / SS120).